The primary structure comprises 327 residues: D-alanine--D-alanine ligase (327 aa).

An ATP-grasp domain is found at K113–A312. V139–T194 is an ATP binding site. Mg(2+) is bound by residues D266, E279, and N281.

The protein belongs to the D-alanine--D-alanine ligase family. It depends on Mg(2+) as a cofactor. The cofactor is Mn(2+).

It is found in the cytoplasm. The catalysed reaction is 2 D-alanine + ATP = D-alanyl-D-alanine + ADP + phosphate + H(+). It functions in the pathway cell wall biogenesis; peptidoglycan biosynthesis. In terms of biological role, cell wall formation. The chain is D-alanine--D-alanine ligase from Cupriavidus metallidurans (strain ATCC 43123 / DSM 2839 / NBRC 102507 / CH34) (Ralstonia metallidurans).